A 913-amino-acid chain; its full sequence is Collagen alpha-2(I) chain (913 aa).

A disordered region spans residues 1–913; that stretch reads SGGFDFSFLP…FGYEGDFYRA (913 aa). Pro10, Pro13, Pro35, and Pro41 each carry 4-hydroxyproline. 3 stretches are compositionally biased toward low complexity: residues 28–67, 125–154, and 199–220; these read LMGP…ARGP, VGAP…SAGP, and PGAN…AGAP. Gly residues predominate over residues 254-263; that stretch reads GESGGKGEPG. Over residues 264–274 the composition is skewed to low complexity; sequence SAGPQGPPGSS. The span at 281–303 shows a compositional bias: gly residues; the sequence is GPNGGSTGPTGPPGLRGGPGSRG. Residues 316–332 show a composition bias toward low complexity; sequence PAGARGASGPAGVRGPS. A 4-hydroxyproline mark is found at Pro338 and Pro341. 2 stretches are compositionally biased toward low complexity: residues 367-386 and 408-421; these read LPGI…RGEA and PDGN…PGLQ. The segment covering 422-431 has biased composition (gly residues); it reads GVQGGKGTTG. Low complexity-rich tracts occupy residues 459–476 and 488–498; these read PGES…SRGP and EPGVVGAPGTA. Over residues 499–517 the composition is skewed to gly residues; that stretch reads GPAGSGGPGERGAAGIPGG. Composition is skewed to low complexity over residues 527–574 and 581–601; these read RGEV…PRGS and VGPA…QPGA. Residues 602–611 are compositionally biased toward basic and acidic residues; that stretch reads KGERGTKGPK. Positions 619 to 629 are enriched in low complexity; sequence PTGPVGSAGPA. Positions 639–648 are enriched in gly residues; that stretch reads GSRGDGGPPG. Residues 650-659 are compositionally biased toward low complexity; it reads TGFPGAAGRT. Gly residues predominate over residues 696 to 705; the sequence is GETGAGGPPG. Low complexity-rich tracts occupy residues 713–740 and 748–758; these read SGEP…LGLP and LPGVAGAVGEP. The span at 759–776 shows a compositional bias: gly residues; it reads GPLGIGPPGARGPSGAGK. Positions 782–797 are enriched in low complexity; the sequence is EPGPVGSVGPVGALGP. Basic and acidic residues predominate over residues 807-818; sequence RGDKGEPGEKGP. Over residues 883 to 895 the composition is skewed to pro residues; that stretch reads SGPPGPPGPPGPP.

The protein belongs to the fibrillar collagen family. As to quaternary structure, trimers of one alpha 2(I) and two alpha 1(I) chains. Interacts (via C-terminus) with TMEM131 (via PapD-L domain); the interaction is direct and is involved in assembly and TRAPPIII ER-to-Golgi transport complex-dependent secretion of collagen. In terms of processing, prolines at the third position of the tripeptide repeating unit (G-X-Y) are hydroxylated in some or all of the chains. Expressed in bones.

The protein resides in the secreted. The protein localises to the extracellular space. It localises to the extracellular matrix. Type I collagen is a member of group I collagen (fibrillar forming collagen). The sequence is that of Collagen alpha-2(I) chain from Parocnus serus (Greater Haitian ground sloth).